The sequence spans 471 residues: Arginine biosynthesis bifunctional protein ArgJ, mitochondrial (471 aa).

The N-terminal 33 residues, 1-33, are a transit peptide targeting the mitochondrion; it reads MAMAGCNGFFLHQLRQPRLQLARQLGRTPSRAY. Substrate contacts are provided by threonine 201, lysine 230, threonine 241, glutamate 327, asparagine 466, and threonine 471. Threonine 241 (nucleophile) is an active-site residue.

The protein belongs to the ArgJ family. In terms of assembly, heterodimer of an alpha and a beta chain. Post-translationally, the alpha and beta chains are autoproteolytically processed from a single precursor protein within the mitochondrion.

Its subcellular location is the mitochondrion matrix. The enzyme catalyses N(2)-acetyl-L-ornithine + L-glutamate = N-acetyl-L-glutamate + L-ornithine. It carries out the reaction L-glutamate + acetyl-CoA = N-acetyl-L-glutamate + CoA + H(+). Its pathway is amino-acid biosynthesis; L-arginine biosynthesis; L-ornithine and N-acetyl-L-glutamate from L-glutamate and N(2)-acetyl-L-ornithine (cyclic): step 1/1. It participates in amino-acid biosynthesis; L-arginine biosynthesis; N(2)-acetyl-L-ornithine from L-glutamate: step 1/4. In terms of biological role, catalyzes two activities which are involved in the cyclic version of arginine biosynthesis: the synthesis of acetylglutamate from glutamate and acetyl-CoA, and of ornithine by transacetylation between acetylornithine and glutamate. The protein is Arginine biosynthesis bifunctional protein ArgJ, mitochondrial of Chaetomium globosum (strain ATCC 6205 / CBS 148.51 / DSM 1962 / NBRC 6347 / NRRL 1970) (Soil fungus).